We begin with the raw amino-acid sequence, 228 residues long: Growth arrest-specific protein 1 homolog (228 aa).

Residues 1–17 form the signal peptide; the sequence is MRRVILPLVMTVTLCLA. Residues Asn143 and Asn156 are each glycosylated (N-linked (GlcNAc...) asparagine). Asp205 carries the GPI-anchor amidated aspartate lipid modification. Residues 206–228 constitute a propeptide, removed in mature form; it reads SSVGHGFNILSAISVYLLTVLVF.

In terms of tissue distribution, pharynx muscle cells from its early formation, in the two-fold embryo, until the adult stage.

Its subcellular location is the cell membrane. Functionally, role in pharynx function or development. This Caenorhabditis elegans protein is Growth arrest-specific protein 1 homolog (phg-1).